The primary structure comprises 434 residues: MSIDIDWERATSGPDGELLAERIRSFIHDKFQQIVLPRFIRSVQVTSFNFGTIPPELEIRDLCDPFPDFYEEDDNENFSESSEEQSPTREPVDRYGSKVESWQANSPGSLEDHMQGRMGFNGPLRMPPGEENTGISPLRSPMNFGDINPYLFPRSRTPGIPGGTSNLGYYMPLSGLSGSQTPLGTVARGSPFSGGWPDVHGARPSRRRSEVEPDSAQSRPSTANTGNTLLSRGSMSSGDPRHSHHSQGVPGSDHGQVLEPNMPPTSSDAPLDDLPPRRMREQKAEDFQVFCRTKYAGNISLSLTAEILLDYPMPSFVGLPLKLNITGLTFDAVAVIAYIRRRIHFCFLSPEDADALIGPEIGSGGGEDTLEPNSPRRKPLSLLREIRVESEIGRKENGKQALKNVGKVEKFVLEQVRRIFEEEFVYPSFWTFLV.

The region spanning 1 to 434 is the SMP-LTD domain; the sequence is MSIDIDWERA…VYPSFWTFLV (434 aa). A compositionally biased stretch (acidic residues) spans 70–83; sequence YEEDDNENFSESSE. 2 disordered regions span residues 70 to 141 and 181 to 275; these read YEED…LRSP and TPLG…DDLP. The span at 86–97 shows a compositional bias: basic and acidic residues; sequence SPTREPVDRYGS. Residues 215-237 are compositionally biased toward polar residues; it reads SAQSRPSTANTGNTLLSRGSMSS.

It belongs to the MDM12 family. Component of the ER-mitochondria encounter structure (ERMES) or MDM complex, composed of MMM1, MDM10, MDM12 and MDM34. An MMM1 homodimer associates with one molecule of MDM12 on each side in a pairwise head-to-tail manner, and the SMP-LTD domains of MMM1 and MDM12 generate a continuous hydrophobic tunnel for phospholipid trafficking.

The protein resides in the mitochondrion outer membrane. It is found in the endoplasmic reticulum membrane. Its function is as follows. Component of the ERMES/MDM complex, which serves as a molecular tether to connect the endoplasmic reticulum (ER) and mitochondria. Components of this complex are involved in the control of mitochondrial shape and protein biogenesis, and function in nonvesicular lipid trafficking between the ER and mitochondria. MDM12 is required for the interaction of the ER-resident membrane protein MMM1 and the outer mitochondrial membrane-resident beta-barrel protein MDM10. The MDM12-MMM1 subcomplex functions in the major beta-barrel assembly pathway that is responsible for biogenesis of all mitochondrial outer membrane beta-barrel proteins, and acts in a late step after the SAM complex. The MDM10-MDM12-MMM1 subcomplex further acts in the TOM40-specific pathway after the action of the MDM12-MMM1 complex. Essential for establishing and maintaining the structure of mitochondria and maintenance of mtDNA nucleoids. The sequence is that of Mitochondrial distribution and morphology protein 12 from Blastomyces gilchristii (strain SLH14081) (Blastomyces dermatitidis).